A 556-amino-acid chain; its full sequence is 2-succinyl-5-enolpyruvyl-6-hydroxy-3-cyclohexene-1-carboxylate synthase (556 aa).

Belongs to the TPP enzyme family. MenD subfamily. Homodimer. The cofactor is Mg(2+). Mn(2+) is required as a cofactor. It depends on thiamine diphosphate as a cofactor.

The catalysed reaction is isochorismate + 2-oxoglutarate + H(+) = 5-enolpyruvoyl-6-hydroxy-2-succinyl-cyclohex-3-ene-1-carboxylate + CO2. Its pathway is quinol/quinone metabolism; 1,4-dihydroxy-2-naphthoate biosynthesis; 1,4-dihydroxy-2-naphthoate from chorismate: step 2/7. The protein operates within quinol/quinone metabolism; menaquinone biosynthesis. Its function is as follows. Catalyzes the thiamine diphosphate-dependent decarboxylation of 2-oxoglutarate and the subsequent addition of the resulting succinic semialdehyde-thiamine pyrophosphate anion to isochorismate to yield 2-succinyl-5-enolpyruvyl-6-hydroxy-3-cyclohexene-1-carboxylate (SEPHCHC). The protein is 2-succinyl-5-enolpyruvyl-6-hydroxy-3-cyclohexene-1-carboxylate synthase of Salmonella paratyphi B (strain ATCC BAA-1250 / SPB7).